Consider the following 354-residue polypeptide: Uroporphyrinogen decarboxylase (354 aa).

Substrate contacts are provided by residues 25–29 (RQAGR), F44, D75, Y152, T207, and H330.

This sequence belongs to the uroporphyrinogen decarboxylase family. In terms of assembly, homodimer.

It is found in the cytoplasm. The catalysed reaction is uroporphyrinogen III + 4 H(+) = coproporphyrinogen III + 4 CO2. Its pathway is porphyrin-containing compound metabolism; protoporphyrin-IX biosynthesis; coproporphyrinogen-III from 5-aminolevulinate: step 4/4. In terms of biological role, catalyzes the decarboxylation of four acetate groups of uroporphyrinogen-III to yield coproporphyrinogen-III. The sequence is that of Uroporphyrinogen decarboxylase from Xylella fastidiosa (strain Temecula1 / ATCC 700964).